Consider the following 129-residue polypeptide: Large ribosomal subunit protein bL21 (129 aa).

Belongs to the bacterial ribosomal protein bL21 family. In terms of assembly, part of the 50S ribosomal subunit. Contacts protein L20.

Functionally, this protein binds to 23S rRNA in the presence of protein L20. This chain is Large ribosomal subunit protein bL21, found in Microcystis aeruginosa (strain NIES-843 / IAM M-2473).